A 931-amino-acid chain; its full sequence is Aftiphilin (931 aa).

The segment at 1–49 is disordered; it reads MEPDIIRMYSSSPPPLDNGAEDDEEDEFGEFGGFSEVSPSGVGFVDFDT. Acidic residues predominate over residues 19-29; sequence GAEDDEEDEFG. Positions 28 to 31 match the WXXF motif 1 motif; sequence FGEF. Positions 33 to 45 are enriched in low complexity; that stretch reads GFSEVSPSGVGFV. Serine 151 carries the phosphoserine modification. The segment covering 371-381 has biased composition (polar residues); it reads SVKTSDVNEIG. The interval 371-454 is disordered; the sequence is SVKTSDVNEI…PFVTSTQDSM (84 aa). A Phosphoserine modification is found at serine 395. A WXXF motif 2 motif is present at residues 433-436; that stretch reads FGDF. Residues 439 to 454 show a composition bias toward polar residues; sequence ANGTTPPFVTSTQDSM. The WXXF motif 3 motif lies at 476–479; sequence FGEF. 2 disordered regions span residues 494–561 and 599–636; these read TESD…SSAG and WQSQRTDETMGTLGTPKMHSVSSAASKGAVASGHLQEP. Positions 516–530 are enriched in basic and acidic residues; sequence GGKDSKPDSKLKNGQ. Threonine 613 is subject to Phosphothreonine. A compositionally biased stretch (low complexity) spans 618 to 631; it reads SVSSAASKGAVASG. The CLTCL1/Clathrin-binding motif lies at 712-714; sequence YQW. A clathrin-binding region spans residues 821-825; sequence LLNLD.

As to quaternary structure, self-associates. Interacts with GGA1 (via GAE domain). Interacts with GGA3 (via GAE domain), AP1G1 (via GAE domain) and AP1G2 (via GAE domain). Component of the aftiphilin/p200/gamma-synergin complex, at least composed of AFTPH/aftiphilin, HEATR5B/p200a and SYNRG/gamma-synergin, which plays a role in the AP1G1/AP-1-mediated protein trafficking from early to recycling endosomes. Within the complex interacts with HEATR5B/p200a and SYNRG/gamma-synergin; the interactions are direct. Interacts with AP1G1/AP-1; the interaction is required to recruit AFTPH/aftiphilin to the perinuclear region of the cell. Interacts with CLTCL1/Clathrin.

The protein resides in the cytoplasm. Its subcellular location is the perinuclear region. It is found in the cytoplasmic vesicle. The protein localises to the clathrin-coated vesicle. Functionally, component of clathrin-coated vesicles. Component of the aftiphilin/p200/gamma-synergin complex, which plays roles in AP1G1/AP-1-mediated protein trafficking including the trafficking of transferrin from early to recycling endosomes, and the membrane trafficking of furin and the lysosomal enzyme cathepsin D between the trans-Golgi network (TGN) and endosomes. The chain is Aftiphilin (Aftph) from Mus musculus (Mouse).